The sequence spans 601 residues: Sulfite reductase [NADPH] flavoprotein alpha-component (601 aa).

The Flavodoxin-like domain occupies 65–203; sequence ITIISASQTG…NYNKWSQDLL (139 aa). Residues 71–76, 118–121, and 154–163 contribute to the FMN site; these read SQTGNA, STQG, and LGDTSYNLFC. Residues 236 to 450 enclose the FAD-binding FR-type domain; sequence KNPAEGIILT…IQTNDNFRLP (215 aa). Residues Thr324, Ile358, 388 to 391, 406 to 408, and 421 to 424 each bind FAD; these read RLYS, TVG, and GGAS. NADP(+)-binding positions include 521–522, 527–531, and Asp563; these read SQ and KIYVQ. Tyr601 serves as a coordination point for FAD.

Belongs to the NADPH-dependent sulphite reductase flavoprotein subunit CysJ family. It in the N-terminal section; belongs to the flavodoxin family. This sequence in the C-terminal section; belongs to the flavoprotein pyridine nucleotide cytochrome reductase family. As to quaternary structure, alpha(8)-beta(8). The alpha component is a flavoprotein, the beta component is a hemoprotein. Requires FAD as cofactor. The cofactor is FMN.

The catalysed reaction is hydrogen sulfide + 3 NADP(+) + 3 H2O = sulfite + 3 NADPH + 4 H(+). Its pathway is sulfur metabolism; hydrogen sulfide biosynthesis; hydrogen sulfide from sulfite (NADPH route): step 1/1. Component of the sulfite reductase complex that catalyzes the 6-electron reduction of sulfite to sulfide. This is one of several activities required for the biosynthesis of L-cysteine from sulfate. The flavoprotein component catalyzes the electron flow from NADPH -&gt; FAD -&gt; FMN to the hemoprotein component. The protein is Sulfite reductase [NADPH] flavoprotein alpha-component of Buchnera aphidicola subsp. Acyrthosiphon pisum (strain APS) (Acyrthosiphon pisum symbiotic bacterium).